A 298-amino-acid chain; its full sequence is Glutamyl-Q tRNA(Asp) synthetase (298 aa).

L-glutamate-binding positions include 8–12 (RFAPS) and E44. Positions 11–21 (PSPTGPLHFGS) match the 'HIGH' region motif. The Zn(2+) site is built by C100, C102, Y123, and C127. L-glutamate is bound by residues Y183 and R201. Residues 239-243 (KLSKQ) carry the 'KMSKS' region motif. ATP is bound at residue K242.

It belongs to the class-I aminoacyl-tRNA synthetase family. GluQ subfamily. It depends on Zn(2+) as a cofactor.

In terms of biological role, catalyzes the tRNA-independent activation of glutamate in presence of ATP and the subsequent transfer of glutamate onto a tRNA(Asp). Glutamate is transferred on the 2-amino-5-(4,5-dihydroxy-2-cyclopenten-1-yl) moiety of the queuosine in the wobble position of the QUC anticodon. The chain is Glutamyl-Q tRNA(Asp) synthetase from Burkholderia orbicola (strain AU 1054).